A 170-amino-acid chain; its full sequence is Mitochondrial fission 1 protein A (170 aa).

One copy of the TPR repeat lies at arginine 90–tryptophan 123. Residues valine 142–isoleucine 162 traverse the membrane as a helical segment.

Belongs to the FIS1 family. In terms of assembly, interacts with ARC5.

The protein localises to the mitochondrion outer membrane. It localises to the peroxisome membrane. In terms of biological role, component of the peroxisomal and mitochondrial division machineries. Plays a role in promoting the fission of mitochondria and peroxisomes. The chain is Mitochondrial fission 1 protein A (FIS1A) from Arabidopsis thaliana (Mouse-ear cress).